Reading from the N-terminus, the 63-residue chain is U-reduvitoxin-Pr4a (63 aa).

The N-terminal stretch at 1–19 is a signal peptide; that stretch reads MKIFGLFLLIATYMALAFA. 3 disulfides stabilise this stretch: Cys24/Cys40, Cys31/Cys45, and Cys39/Cys52.

It belongs to the venom Ptu1-like knottin family. Expressed by the venom gland.

Its subcellular location is the secreted. Its function is as follows. Binds reversibly and blocks P/Q-type voltage-gated calcium channels (Cav). The sequence is that of U-reduvitoxin-Pr4a from Platymeris rhadamanthus (Red spot assassin bug).